A 360-amino-acid chain; its full sequence is Isocitrate dehydrogenase [NAD] regulatory subunit B, mitochondrial (360 aa).

The transit peptide at 1 to 113 directs the protein to the mitochondrion; it reads MLGRLRTVVK…MELRKALDLY (113 aa). Substrate contacts are provided by Ser101, Asn103, Arg107, and Arg140. Mg(2+) is bound at residue Asp227. Residues 284–290 and Asn297 each bind NADP(+); that span reads HHVAADI.

The protein belongs to the isocitrate and isopropylmalate dehydrogenases family. In terms of assembly, heterooligomer of catalytic and regulatory subunits. Requires Mg(2+) as cofactor. Mn(2+) serves as cofactor.

It localises to the mitochondrion. It catalyses the reaction D-threo-isocitrate + NAD(+) = 2-oxoglutarate + CO2 + NADH. Functionally, performs an essential role in the oxidative function of the citric acid cycle. This is Isocitrate dehydrogenase [NAD] regulatory subunit B, mitochondrial (idhB) from Dictyostelium discoideum (Social amoeba).